We begin with the raw amino-acid sequence, 287 residues long: Nucleotide-binding protein Pmob_0154 (287 aa).

Glycine 15–threonine 22 is a binding site for ATP. Aspartate 64 to tryptophan 67 is a binding site for GTP.

This sequence belongs to the RapZ-like family.

Its function is as follows. Displays ATPase and GTPase activities. The polypeptide is Nucleotide-binding protein Pmob_0154 (Petrotoga mobilis (strain DSM 10674 / SJ95)).